Consider the following 446-residue polypeptide: UDP-N-acetylmuramoylalanine--D-glutamate ligase (446 aa).

116 to 122 (GSNGKTT) contributes to the ATP binding site.

The protein belongs to the MurCDEF family.

Its subcellular location is the cytoplasm. It carries out the reaction UDP-N-acetyl-alpha-D-muramoyl-L-alanine + D-glutamate + ATP = UDP-N-acetyl-alpha-D-muramoyl-L-alanyl-D-glutamate + ADP + phosphate + H(+). It participates in cell wall biogenesis; peptidoglycan biosynthesis. Cell wall formation. Catalyzes the addition of glutamate to the nucleotide precursor UDP-N-acetylmuramoyl-L-alanine (UMA). In Marinobacter nauticus (strain ATCC 700491 / DSM 11845 / VT8) (Marinobacter aquaeolei), this protein is UDP-N-acetylmuramoylalanine--D-glutamate ligase.